A 263-amino-acid polypeptide reads, in one-letter code: Peptide methionine sulfoxide reductase A4, chloroplastic (263 aa).

Residues 1–75 (MPPLLASTSS…GLGGLGGSPR (75 aa)) constitute a chloroplast transit peptide.

This sequence belongs to the MsrA Met sulfoxide reductase family. In terms of tissue distribution, expressed in roots, stems, leaves and flowers.

Its subcellular location is the plastid. The protein localises to the chloroplast. The catalysed reaction is L-methionyl-[protein] + [thioredoxin]-disulfide + H2O = L-methionyl-(S)-S-oxide-[protein] + [thioredoxin]-dithiol. It catalyses the reaction [thioredoxin]-disulfide + L-methionine + H2O = L-methionine (S)-S-oxide + [thioredoxin]-dithiol. In terms of biological role, catalyzes the reduction of methionine sulfoxide (MetSO) to methionine in proteins. Involved in abiotic and salt stress responses. Plays a protective role against oxidative stress by restoring activity to proteins that have been inactivated by methionine oxidation. MSRA family specifically reduces the MetSO S-enantiomer. In Oryza sativa subsp. japonica (Rice), this protein is Peptide methionine sulfoxide reductase A4, chloroplastic.